A 275-amino-acid chain; its full sequence is Mitochondrial prohibitin complex protein 1 (275 aa).

A coiled-coil region spans residues 180 to 213 (REFTEAVEMKQVAQQEAEKARYLVEKAEQMKIAA).

This sequence belongs to the prohibitin family. High molecular weight complex that consist of phb-1 and phb-2.

It is found in the mitochondrion inner membrane. PHB proteins are essential during embryonic development and are required for somatic and germline differentiation in the larval gonad. A deficiency in PHB proteins results in altered mitochondrial biogenesis in body wall muscle cells. This Caenorhabditis elegans protein is Mitochondrial prohibitin complex protein 1 (phb-1).